The primary structure comprises 312 residues: Very long chain fatty acid elongase 4 (312 aa).

An N-linked (GlcNAc...) asparagine glycan is attached at asparagine 20. Transmembrane regions (helical) follow at residues 42–62, 78–98, 127–147, 165–185, 188–208, 217–237, and 246–266; these read LMQS…FVWL, VLII…RELF, ALWW…FFIL, MFTL…FFGA, NSFI…GPWI, YLTM…ALSL, and WMHW…LNFY. Residues 273 to 292 show a composition bias toward polar residues; that stretch reads PKQSKTGKTATNGISSNGVN. Residues 273 to 312 form a disordered region; sequence PKQSKTGKTATNGISSNGVNKSEKALENGKPQKNGKPKGE. Residue asparagine 292 is glycosylated (N-linked (GlcNAc...) asparagine). The short motif at 308–312 is the Di-lysine motif element; it reads KPKGE.

The protein belongs to the ELO family. ELOVL4 subfamily. In terms of assembly, oligomer. N-glycosylated. Expressed in the retina, exclusively in photoreceptor cells and in the brain, skin, testis and lens.

It is found in the endoplasmic reticulum membrane. It catalyses the reaction a very-long-chain acyl-CoA + malonyl-CoA + H(+) = a very-long-chain 3-oxoacyl-CoA + CO2 + CoA. The catalysed reaction is hexacosanoyl-CoA + malonyl-CoA + H(+) = 3-oxooctacosanyol-CoA + CO2 + CoA. It carries out the reaction octacosanoyl-CoA + malonyl-CoA + H(+) = 3-oxo-triacontanoyl-CoA + CO2 + CoA. The enzyme catalyses triacontanoyl-CoA + malonyl-CoA + H(+) = 3-oxo-dotriacontanoyl-CoA + CO2 + CoA. It catalyses the reaction (19Z,22Z,25Z,28Z,31Z)-tetratriacontapentaenoyl-CoA + malonyl-CoA + H(+) = 3-oxo-(21Z,24Z,27Z,30Z,33Z)-hexatriacontapentaenoyl-CoA + CO2 + CoA. The catalysed reaction is (4Z,7Z,10Z,13Z,16Z,19Z)-docosahexaenoyl-CoA + malonyl-CoA + H(+) = 3-oxo-(6Z,9Z,12Z,15Z,18Z,21Z)-tetracosahexaenoyl-CoA + CO2 + CoA. It carries out the reaction (7Z,10Z,13Z,16Z)-docosatetraenoyl-CoA + malonyl-CoA + H(+) = (9Z,12Z,15Z,18Z)-3-oxotetracosatetraenoyl-CoA + CO2 + CoA. The enzyme catalyses (11Z,14Z,17Z,20Z,23Z)-hexacosapentaenoyl-CoA + malonyl-CoA + H(+) = 3-oxo-(13Z,16Z,19Z,22Z,25Z)-octacosapentaenoyl-CoA + CO2 + CoA. It catalyses the reaction (13Z,16Z,19Z,22Z,25Z)-octacosapentaenoyl-CoA + malonyl-CoA + H(+) = 3-oxo-(15Z,18Z,21Z,24Z,27Z)-triacontapentaenoyl-CoA + CO2 + CoA. The catalysed reaction is (15Z,18Z,21Z,24Z,27Z)-triacontapentaenoyl-CoA + malonyl-CoA + H(+) = 3-oxo-(17Z,20Z,23Z,26Z,29Z)-dotriacontapentaenoyl-CoA + CO2 + CoA. It carries out the reaction (17Z,20Z,23Z,26Z,29Z)-dotriacontapentaenoyl-CoA + malonyl-CoA + H(+) = 3-oxo-(19Z,22Z,25Z,28Z,31Z)-tetratriacontapentaenoyl-CoA + CO2 + CoA. The enzyme catalyses (21Z,24Z,27Z,30Z,33Z)-hexatriacontapentaenoyl-CoA + malonyl-CoA + H(+) = 3-oxo-(23Z,26Z,29Z,32Z,35Z)-octatriacontapentaenoyl-CoA + CO2 + CoA. It catalyses the reaction (11Z,14Z,17Z,20Z)-hexacosatetraenoyl-CoA + malonyl-CoA + H(+) = (13Z,16Z,19Z,22Z)-3-oxooctacosatetraenoyl-CoA + CO2 + CoA. The catalysed reaction is (13Z,16Z,19Z,22Z)-octacosatetraenoyl-CoA + malonyl-CoA + H(+) = 3-oxo-(15Z,18Z,21Z,24Z)-triacontatetraenoyl-CoA + CO2 + CoA. It carries out the reaction (15Z,18Z,21Z,24Z)-triacontatetraenoyl-CoA + malonyl-CoA + H(+) = 3-oxo-(17Z,20Z,23Z,26Z)-dotriacontatetraenoyl-CoA + CO2 + CoA. The enzyme catalyses (17Z,20Z,23Z,26Z)-dotriacontatetraenoyl-CoA + malonyl-CoA + H(+) = 3-oxo-(19Z,22Z,25Z,28Z)-tetratriacontatetraenoyl-CoA + CO2 + CoA. It catalyses the reaction (19Z,22Z,25Z,28Z)-tetratriacontatetraenoyl-CoA + malonyl-CoA + H(+) = 3-oxo-(21Z,24Z,27Z,30Z)-hexatriacontatetraenoyl-CoA + CO2 + CoA. The catalysed reaction is (21Z,24Z,27Z,30Z)-hexatriacontatetraenoyl-CoA + malonyl-CoA + H(+) = 3-oxo-(23Z,26Z,29Z,32Z)-octatriacontatetraenoyl-CoA + CO2 + CoA. It carries out the reaction (6Z,9Z,12Z,15Z,18Z,21Z)-tetracosahexaenoyl-CoA + malonyl-CoA + H(+) = 3-oxo-(8Z,11Z,14Z,17Z,20Z,23Z)-hexacosahexaenoyl-CoA + CO2 + CoA. The enzyme catalyses (8Z,11Z,14Z,17Z,20Z,23Z)-hexacosahexaenoyl-CoA + malonyl-CoA + H(+) = 3-oxo-(10Z,13Z,16Z,19Z,22Z,25Z)-octacosahexaenoyl-CoA + CO2 + CoA. It catalyses the reaction (10Z,13Z,16Z,19Z,22Z,25Z)-octacosahexaenoyl-CoA + malonyl-CoA + H(+) = 3-oxo-(12Z,15Z,18Z,21Z,24Z,27Z)-triacontahexaenoyl-CoA + CO2 + CoA. The catalysed reaction is (12Z,15Z,18Z,21Z,24Z,27Z)-triacontahexaenoyl-CoA + malonyl-CoA + H(+) = 3-oxo-(14Z,17Z,20Z,23Z,26Z,29Z)-dotriacontahexaenoyl-CoA + CO2 + CoA. It carries out the reaction (14Z,17Z,20Z,23Z,26Z,29Z)-dotriacontahexaenoyl-CoA + malonyl-CoA + H(+) = 3-oxo-(16Z,19Z,22Z,25Z,28Z,31Z)-tetratriacontahexaenoyl-CoA + CO2 + CoA. The enzyme catalyses (16Z,19Z,22Z,25Z,28Z,31Z)-tetratriacontahexaenoyl-CoA + malonyl-CoA + H(+) = 3-oxo-(18Z,21Z,24Z,27Z,30Z,33Z)-hexatriacontahexaenoyl-CoA + CO2 + CoA. It catalyses the reaction (9Z,12Z,15Z,18Z,21Z)-tetracosapentaenoyl-CoA + malonyl-CoA + H(+) = 3-oxo-(11Z,14Z,17Z,20Z,23Z)-hexacosapentaenoyl-CoA + CO2 + CoA. The protein operates within lipid metabolism; fatty acid biosynthesis. Catalyzes the first and rate-limiting reaction of the four reactions that constitute the long-chain fatty acids elongation cycle. This endoplasmic reticulum-bound enzymatic process allows the addition of 2 carbons to the chain of long- and very long-chain fatty acids (VLCFAs) per cycle. Condensing enzyme that catalyzes the synthesis of very long chain saturated (VLC-SFA) and polyunsaturated (PUFA) fatty acids that are involved in multiple biological processes as precursors of membrane lipids and lipid mediators. May play a critical role in early brain and skin development. This Mus musculus (Mouse) protein is Very long chain fatty acid elongase 4.